The sequence spans 273 residues: Undecaprenyl-diphosphatase (273 aa).

Transmembrane regions (helical) follow at residues 7 to 27, 45 to 65, 89 to 109, 115 to 135, 152 to 171, 189 to 209, 221 to 241, and 253 to 273; these read LWIA…PVSS, AETF…VMFW, LTLI…LLLH, LFNP…LIAA, TYRQ…WPGF, YAAS…ATGL, ADFP…LIAI, and FIPF…LFVL.

The protein belongs to the UppP family.

The protein localises to the cell inner membrane. It carries out the reaction di-trans,octa-cis-undecaprenyl diphosphate + H2O = di-trans,octa-cis-undecaprenyl phosphate + phosphate + H(+). Functionally, catalyzes the dephosphorylation of undecaprenyl diphosphate (UPP). Confers resistance to bacitracin. The chain is Undecaprenyl-diphosphatase from Erwinia tasmaniensis (strain DSM 17950 / CFBP 7177 / CIP 109463 / NCPPB 4357 / Et1/99).